A 296-amino-acid polypeptide reads, in one-letter code: Diaminopimelate epimerase (296 aa).

Positions 17, 49, and 69 each coordinate substrate. C78 acts as the Proton donor in catalysis. Residues 79-80 (GN), N171, N205, and 223-224 (ER) contribute to the substrate site. C232 functions as the Proton acceptor in the catalytic mechanism. 233–234 (GT) is a binding site for substrate.

The protein belongs to the diaminopimelate epimerase family. In terms of assembly, homodimer.

The protein localises to the cytoplasm. It catalyses the reaction (2S,6S)-2,6-diaminopimelate = meso-2,6-diaminopimelate. It functions in the pathway amino-acid biosynthesis; L-lysine biosynthesis via DAP pathway; DL-2,6-diaminopimelate from LL-2,6-diaminopimelate: step 1/1. In terms of biological role, catalyzes the stereoinversion of LL-2,6-diaminopimelate (L,L-DAP) to meso-diaminopimelate (meso-DAP), a precursor of L-lysine and an essential component of the bacterial peptidoglycan. The chain is Diaminopimelate epimerase from Methylorubrum extorquens (strain CM4 / NCIMB 13688) (Methylobacterium extorquens).